A 960-amino-acid polypeptide reads, in one-letter code: Valine--tRNA ligase (960 aa).

Positions 42 to 52 (PNITGNLHMGH) match the 'HIGH' region motif. The 'KMSKS' region motif lies at 553-557 (KMSKS). Residue lysine 556 participates in ATP binding. A coiled-coil region spans residues 879-950 (VLKAIDKEIE…LSQQLESLHD (72 aa)).

Belongs to the class-I aminoacyl-tRNA synthetase family. ValS type 1 subfamily. In terms of assembly, monomer.

The protein localises to the cytoplasm. The enzyme catalyses tRNA(Val) + L-valine + ATP = L-valyl-tRNA(Val) + AMP + diphosphate. Functionally, catalyzes the attachment of valine to tRNA(Val). As ValRS can inadvertently accommodate and process structurally similar amino acids such as threonine, to avoid such errors, it has a 'posttransfer' editing activity that hydrolyzes mischarged Thr-tRNA(Val) in a tRNA-dependent manner. The sequence is that of Valine--tRNA ligase from Buchnera aphidicola subsp. Schizaphis graminum (strain Sg).